The sequence spans 335 residues: Glyceraldehyde-3-phosphate dehydrogenase (335 aa).

Residues Arg-12–Ile-13, Asp-34, and Lys-79 each bind NAD(+). Residues Ser-150–Thr-152, Thr-181, Thr-210–Gly-211, and Arg-233 contribute to the D-glyceraldehyde 3-phosphate site. The active-site Nucleophile is Cys-151. Residue Asn-315 coordinates NAD(+).

This sequence belongs to the glyceraldehyde-3-phosphate dehydrogenase family. As to quaternary structure, homotetramer.

It is found in the cytoplasm. The enzyme catalyses D-glyceraldehyde 3-phosphate + phosphate + NAD(+) = (2R)-3-phospho-glyceroyl phosphate + NADH + H(+). It participates in carbohydrate degradation; glycolysis; pyruvate from D-glyceraldehyde 3-phosphate: step 1/5. This Debaryomyces hansenii (strain ATCC 36239 / CBS 767 / BCRC 21394 / JCM 1990 / NBRC 0083 / IGC 2968) (Yeast) protein is Glyceraldehyde-3-phosphate dehydrogenase (GPD).